The following is a 132-amino-acid chain: Small ribosomal subunit protein eS6 (132 aa).

It belongs to the eukaryotic ribosomal protein eS6 family.

This chain is Small ribosomal subunit protein eS6, found in Methanosphaerula palustris (strain ATCC BAA-1556 / DSM 19958 / E1-9c).